We begin with the raw amino-acid sequence, 373 residues long: MANTTGEPEEVSGALSPPSASAYVKLVLLGLIMCVSLAGNAILSLLVLKERALHKAPYYFLLDLCLADGIRSAVCFPFVLASVRHGSSWTFSALSCKIVAFMAVLFCFHAAFMLFCISVTRYMAIAHHRFYAKRMTLWTCAAVICMAWTLSVAMAFPPVFDVGTYKFIREEDQCIFEHRYFKANDTLGFMLMLAVLMAATHAVYGKLLLFEYRHRKMKPVQMVPAISQNWTFHGPGATGQAAANWIAGFGRGPMPPTLLGIRQNGHAASRRLLGMDEVKGEKQLGRMFYAITLLFLLLWSPYIVACYWRVFVKACAVPHRYLATAVWMSFAQAAVNPIVCFLLNKDLKKCLRTHAPCWGTGGAPAPREPYCVM.

Topologically, residues 1–26 (MANTTGEPEEVSGALSPPSASAYVKL) are extracellular. An N-linked (GlcNAc...) asparagine glycan is attached at N3. Residues 27–47 (VLLGLIMCVSLAGNAILSLLV) traverse the membrane as a helical segment. Topologically, residues 48-59 (LKERALHKAPYY) are cytoplasmic. Residues 60 to 80 (FLLDLCLADGIRSAVCFPFVL) traverse the membrane as a helical segment. The Extracellular segment spans residues 81–97 (ASVRHGSSWTFSALSCK). Cysteines 96 and 174 form a disulfide. Residues 98–118 (IVAFMAVLFCFHAAFMLFCIS) traverse the membrane as a helical segment. The Cytoplasmic portion of the chain corresponds to 119–139 (VTRYMAIAHHRFYAKRMTLWT). A helical transmembrane segment spans residues 140 to 160 (CAAVICMAWTLSVAMAFPPVF). At 161-188 (DVGTYKFIREEDQCIFEHRYFKANDTLG) the chain is on the extracellular side. N-linked (GlcNAc...) asparagine glycosylation is present at N184. Residues 189 to 209 (FMLMLAVLMAATHAVYGKLLL) form a helical membrane-spanning segment. Residues 210 to 287 (FEYRHRKMKP…VKGEKQLGRM (78 aa)) are Cytoplasmic-facing. Residues 288–308 (FYAITLLFLLLWSPYIVACYW) traverse the membrane as a helical segment. The Extracellular portion of the chain corresponds to 309-322 (RVFVKACAVPHRYL). The helical transmembrane segment at 323 to 343 (ATAVWMSFAQAAVNPIVCFLL) threads the bilayer. Residues 344 to 373 (NKDLKKCLRTHAPCWGTGGAPAPREPYCVM) are Cytoplasmic-facing.

It belongs to the G-protein coupled receptor 1 family. Expressed in the ovary, specifically in granulosa cells of follicles that have passed the primary stage and in oocytes (at protein level). Expressed at high levels in brain. Lower levels in small intestine. In brain regions, detected in all regions tested. Highest levels in the cerebellum and cerebral cortex.

The protein resides in the cell membrane. Its function is as follows. Is a receptor for the SMIM20 derived peptides Phoenixin-14 and Phoenixin-20. It mediates the Phoenixin-14 and Phoenixin-20 augmentation of gonadotropin-releasing hormone (GNRH) signaling in the hypothalamus and pituitary gland. In the ovary, it mediates the effects of Phoenixin-14 and Phoenixin-20 induced granulosa cell proliferation during follicular growth. In Homo sapiens (Human), this protein is Probable G-protein coupled receptor 173 (GPR173).